Reading from the N-terminus, the 332-residue chain is Autoinducer 2 import system permease protein LsrD (332 aa).

10 helical membrane passes run 7–27, 45–65, 70–90, 91–111, 118–138, 162–182, 216–236, 240–260, 261–281, and 288–308; these read YSWE…FGLI, ICIG…GMDI, TIGL…PLPL, AIII…GLII, LVIT…LSGM, FLGI…FWLL, VYAM…SYFG, SDLG…GGAN, IYGG…VGFL, and AGVP…VVVV.

This sequence belongs to the binding-protein-dependent transport system permease family. AraH/RbsC subfamily. The complex is composed of two ATP-binding proteins (LsrA), two transmembrane proteins (LsrC and LsrD) and a solute-binding protein (LsrB).

The protein resides in the cell inner membrane. Its function is as follows. Part of the ABC transporter complex LsrABCD involved in autoinducer 2 (AI-2) import. Probably responsible for the translocation of the substrate across the membrane. This Salmonella paratyphi B (strain ATCC BAA-1250 / SPB7) protein is Autoinducer 2 import system permease protein LsrD (lsrD).